Consider the following 109-residue polypeptide: Membrane-bound lysozyme inhibitor of C-type lysozyme (109 aa).

The signal sequence occupies residues 1-17 (MTMKKLLIIILPVLLSG). Cys-18 carries N-palmitoyl cysteine lipidation. Cys-18 carries S-diacylglycerol cysteine lipidation. Cys-37 and Cys-102 are disulfide-bonded.

This sequence belongs to the MliC family. Type 1 subfamily. Monomer.

The protein localises to the cell outer membrane. Its function is as follows. Specifically inhibits C-type lysozymes. The protein is Membrane-bound lysozyme inhibitor of C-type lysozyme of Escherichia coli (strain K12).